The chain runs to 645 residues: Transcription termination factor FttA (645 aa).

The KHa stretch occupies residues 10 to 77 (APSNQNIMAT…IIVRIDESVR (68 aa)). The segment at 78-146 (KKEEDARKML…WTLRIRKATT (69 aa)) is KHb. The interval 187-391 (EISLTALGGF…LLIESTYGAK (205 aa)) is metallo-beta-lactamase N-terminus. Zn(2+)-binding residues include histidine 250, histidine 252, aspartate 254, histidine 255, histidine 337, and aspartate 360. The tract at residues 392–586 (EDIQPTRQEV…CRMEKLDGFS (195 aa)) is beta-Casp. The tract at residues 587 to 645 (GHSDYNQLTGFVQKLRPKLRRVLVNHGERRKSENLALAVRRMFRIPAHYPQIQESIKLF) is metallo-beta-lactamase C-terminus. Histidine 612 lines the Zn(2+) pocket.

It belongs to the metallo-beta-lactamase superfamily. RNA-metabolizing metallo-beta-lactamase-like family. FttA subfamily. Homodimer. Interacts with RNA polymerase (RNAP), interacts with the Spt4-Spt5 complex. The cofactor is Zn(2+).

Terminates transcription on the whole genome. Termination is linked to FttA-mediated RNA cleavage and does not require NTP hydrolysis. Cleaves endonucleolytically at the RNA exit channel of RNA polymerase (RNAP); the 5'-3' exonuclease activity of this protein degrades the nascent RNA released from RNAP. Its function is as follows. Terminates transcription genome-wide in M.maripaludis. Restores wild-type growth to a strain of Methanococcus maripaludis depleted for this gene at 22 degrees Celsius and prevents transcriptional read-through. Transcription termination is most effective in vivo on RNAs with more than one U4-tract in their 3'-ends. Has endonuclease activity after U-rich tracts in transcription termination sequences. The polypeptide is Transcription termination factor FttA (Cenarchaeum symbiosum (strain A)).